Reading from the N-terminus, the 245-residue chain is Exosome complex component RRP41 (245 aa).

Residue Ala-2 is modified to N-acetylalanine.

This sequence belongs to the RNase PH family. As to quaternary structure, component of the RNA exosome core complex (Exo-9), composed of EXOSC1, EXOSC2, EXOSC3, EXOSC4, EXOSC5, EXOSC6, EXOSC7, EXOSC8 and EXOSC9; within the complex interacts with EXOSC2, EXOSC7 and EXOSC9. The catalytically inactive RNA exosome core complex (Exo-9) associates with the catalytic subunit EXOSC10/RRP6. Exo-9 may associate with DIS3 to form the nucleolar exosome complex, or DIS3L to form the cytoplasmic exosome complex. Exo-9 is formed by a hexameric base ring consisting of the heterodimers EXOSC4-EXOSC9, EXOSC5-EXOSC8 and EXOSC6-EXOSC7, and a cap ring consisting of EXOSC1, EXOSC2 and EXOSC3. The RNA exosome complex associates with cofactors C1D/RRP47, MPHOSPH6/MPP6 and MTREX/MTR4. Interacts with DDX60. Interacts with DIS3; the interaction is direct.

The protein resides in the cytoplasm. It is found in the nucleus. Its subcellular location is the nucleolus. The protein localises to the nucleoplasm. Its function is as follows. Non-catalytic component of the RNA exosome complex which has 3'-&gt;5' exoribonuclease activity and participates in a multitude of cellular RNA processing and degradation events. In the nucleus, the RNA exosome complex is involved in proper maturation of stable RNA species such as rRNA, snRNA and snoRNA, in the elimination of RNA processing by-products and non-coding 'pervasive' transcripts, such as antisense RNA species and promoter-upstream transcripts (PROMPTs), and of mRNAs with processing defects, thereby limiting or excluding their export to the cytoplasm. The RNA exosome may be involved in Ig class switch recombination (CSR) and/or Ig variable region somatic hypermutation (SHM) by targeting AICDA deamination activity to transcribed dsDNA substrates. In the cytoplasm, the RNA exosome complex is involved in general mRNA turnover and specifically degrades inherently unstable mRNAs containing AU-rich elements (AREs) within their 3' untranslated regions, and in RNA surveillance pathways, preventing translation of aberrant mRNAs. It seems to be involved in degradation of histone mRNA. The catalytic inactive RNA exosome core complex of 9 subunits (Exo-9) is proposed to play a pivotal role in the binding and presentation of RNA for ribonucleolysis, and to serve as a scaffold for the association with catalytic subunits and accessory proteins or complexes. EXOSC4 binds to ARE-containing RNAs. The chain is Exosome complex component RRP41 (Exosc4) from Mus musculus (Mouse).